The following is a 331-amino-acid chain: UPF0194 membrane protein YbhG (331 aa).

The N-terminal stretch at 1 to 15 is a signal peptide; the sequence is MKKPVVIGLAVVVLA. Residues 107–208 are a coiled coil; sequence EEIAQAAAAV…LNLQDSTLIA (102 aa).

It belongs to the UPF0194 family.

The protein resides in the periplasm. The chain is UPF0194 membrane protein YbhG from Escherichia coli O157:H7 (strain EC4115 / EHEC).